Reading from the N-terminus, the 574-residue chain is ATP-grasp enzyme fsqD (574 aa).

The 229-residue stretch at 234-462 (NKFLTSKYVG…YWGLAAVLGV (229 aa)) folds into the ATP-grasp domain. 263–318 (ALPYPLIVKPCDGWSSEGVSRVESPDAFPAAVKSIDTSRHGTEFVMEPYCDGPEVD) contributes to the ATP binding site. Mg(2+)-binding residues include Glu394, Glu431, and Asn433. Mn(2+) is bound by residues Glu394, Glu431, and Asn433.

It depends on Mg(2+) as a cofactor. Requires Mn(2+) as cofactor.

Its pathway is secondary metabolite biosynthesis. In terms of biological role, ATP-grasp enzyme; part of the gene cluster that mediates the biosynthesis of the isoquinoline alkaloids fumisoquin A, fumisoquin B and fumisoquin C; as well as small amounts of fumipyrrole as a shunt metabolite. The products of the cluster lead to a brown coloration and are important for growth and conidiation. The nonribosomal peptide synthetase-like protein fsqF, which lacks a canonical condensation domain, is required for addition of a serine-derived dehydroalanine moiety to activated tyrosine but is not essential for the subsequent steps leading to isoquinoline formation. A different enzyme, most likely the ATP-grasp enzyme fsqD, is responsible for activation of tyrosine. Three additional enzymes encoded by the fsq cluster, the N-methyltransferase fsqC, the phenol 2-monooxygenase fsqG and the FAD-dependent oxidase fsqB, catalyze the formation of the isoquinoline ring system in the fumisoquins. FsqB converts the fspF thiolation domain-bound (2S,4S,5S)-2-amino-6-(3,4-dihydroxyphenyl)-4-hydroxy-5-(methylamino)hexanoyl into isoquinoline. The cyclization most likely proceeds via a two-step mechanism, beginning with FAD-dependent oxidation of the methyl group to an iminium species followed by electrophilic attack on the deprotonated phenol. The chain is ATP-grasp enzyme fsqD from Aspergillus fumigatus (strain ATCC MYA-4609 / CBS 101355 / FGSC A1100 / Af293) (Neosartorya fumigata).